Reading from the N-terminus, the 775-residue chain is Chitin synthase 6 (775 aa).

6 consecutive transmembrane segments (helical) span residues 19–39 (VLLM…YCLV), 54–74 (CIIV…IMVV), 94–114 (LQWF…LFCI), 441–461 (FMQN…LAIM), 470–490 (LPVG…LYFG), and 498–518 (IWLY…YMVY). The span at 532–541 (RADAAAADSH) shows a compositional bias: low complexity. 2 disordered regions span residues 532 to 603 (RADA…DGKF) and 702 to 775 (PSAF…KTSR). Residues 542 to 556 (TTAREAAEQAEKQGD) show a composition bias toward basic and acidic residues. The segment covering 577-586 (NRESTTTSEL) has biased composition (polar residues). Positions 702–713 (PSAFPHAHSASA) are enriched in low complexity. Asparagine 724 carries N-linked (GlcNAc...) asparagine glycosylation. Residues 732 to 741 (RSEDIQRFSE) show a composition bias toward basic and acidic residues. Positions 754–763 (SRNVGNSSFA) are enriched in polar residues. N-linked (GlcNAc...) asparagine glycosylation is present at asparagine 759. Over residues 766–775 (MAKRTPKTSR) the composition is skewed to basic residues.

The protein belongs to the chitin synthase family. Class VII subfamily.

The protein localises to the cell membrane. The catalysed reaction is [(1-&gt;4)-N-acetyl-beta-D-glucosaminyl](n) + UDP-N-acetyl-alpha-D-glucosamine = [(1-&gt;4)-N-acetyl-beta-D-glucosaminyl](n+1) + UDP + H(+). Polymerizes chitin, a structural polymer of the cell wall and septum, by transferring the sugar moiety of UDP-GlcNAc to the non-reducing end of the growing chitin polymer. Shows additive effects in septum formation with CHS1, CHS2, CHS3A, CHS4, CHS5 and CHS7. Involved in virulence and mediates mycotoxin deoxinivalenol (DON) biosynthesis via the regulation of the expression of TRI4, TRI5 and TRI6. The sequence is that of Chitin synthase 6 from Gibberella zeae (strain ATCC MYA-4620 / CBS 123657 / FGSC 9075 / NRRL 31084 / PH-1) (Wheat head blight fungus).